Here is a 144-residue protein sequence, read N- to C-terminus: Group IID secretory phospholipase A2 (144 aa).

The N-terminal stretch at Met-1–Gly-19 is a signal peptide. Disulfide bonds link Cys-45–Cys-137, Cys-47–Cys-63, Cys-62–Cys-117, Cys-68–Cys-144, Cys-69–Cys-110, Cys-78–Cys-103, and Cys-96–Cys-108. The Ca(2+) site is built by His-46, Gly-48, and Gly-50. The active site involves His-66. Ca(2+) is bound at residue Asp-67. Asn-99 is a glycosylation site (N-linked (GlcNAc...) asparagine). The active site involves Asp-111.

Belongs to the phospholipase A2 family. Requires Ca(2+) as cofactor. Highly expressed in secondary lymphoid tissues, spleen and lymph nodes. Expressed at a lesser extent in thymus. Expressed in CD4-positive, IL2RA/CD25-positive, FOXP3-positive Tregs (at protein level). Expressed in myeloid cell subsets resident in spleen and lymph nodes, ITGAX/CD11C-positive dendritic cells and macrophages (at protein level). Enriched in CD4-positive, ITGAM/CD11B-positive dendritic cell subset. Expressed in pulmonary ITGAX/CD11C-positive dendritic cell subset (at protein level).

It is found in the secreted. The protein localises to the cell membrane. Its subcellular location is the cytoplasm. It catalyses the reaction a 1,2-diacyl-sn-glycero-3-phosphoethanolamine + H2O = a 1-acyl-sn-glycero-3-phosphoethanolamine + a fatty acid + H(+). The enzyme catalyses 1-hexadecanoyl-2-(9Z-octadecenoyl)-sn-glycero-3-phosphoethanolamine + H2O = 1-hexadecanoyl-sn-glycero-3-phosphoethanolamine + (9Z)-octadecenoate + H(+). The catalysed reaction is 1-hexadecanoyl-2-(9Z,12Z-octadecadienoyl)-sn-glycero-3-phosphoethanolamine + H2O = 1-hexadecanoyl-sn-glycero-3-phosphoethanolamine + (9Z,12Z)-octadecadienoate + H(+). It carries out the reaction 1,2-dihexadecanoyl-sn-glycero-3-phospho-(1'-sn-glycerol) + H2O = 1-hexadecanoyl-sn-glycero-3-phospho-(1'-sn-glycerol) + hexadecanoate + H(+). It catalyses the reaction 1-hexadecanoyl-2-(9Z-octadecenoyl)-sn-glycero-3-phospho-(1'-sn-glycerol) + H2O = 1-hexadecanoyl-sn-glycero-3-phospho-(1'-sn-glycerol) + (9Z)-octadecenoate + H(+). The enzyme catalyses a 1,2-diacyl-sn-glycero-3-phosphocholine + H2O = a 1-acyl-sn-glycero-3-phosphocholine + a fatty acid + H(+). The catalysed reaction is 1,2-dihexadecanoyl-sn-glycero-3-phosphocholine + H2O = 1-hexadecanoyl-sn-glycero-3-phosphocholine + hexadecanoate + H(+). It carries out the reaction 1-hexadecanoyl-2-(9Z-octadecenoyl)-sn-glycero-3-phosphocholine + H2O = 1-hexadecanoyl-sn-glycero-3-phosphocholine + (9Z)-octadecenoate + H(+). It catalyses the reaction 1-hexadecanoyl-2-(9Z,12Z-octadecadienoyl)-sn-glycero-3-phosphocholine + H2O = (9Z,12Z)-octadecadienoate + 1-hexadecanoyl-sn-glycero-3-phosphocholine + H(+). The enzyme catalyses 1-hexadecanoyl-2-(4Z,7Z,10Z,13Z,16Z,19Z-docosahexaenoyl)-sn-glycero-3-phosphocholine + H2O = (4Z,7Z,10Z,13Z,16Z,19Z)-docosahexaenoate + 1-hexadecanoyl-sn-glycero-3-phosphocholine + H(+). In terms of biological role, secretory calcium-dependent phospholipase A2 that primarily targets extracellular lipids, exerting anti-inflammatory and immunosuppressive functions. Hydrolyzes the ester bond of the fatty acyl group attached at sn-2 position of phospholipids (phospholipase A2 activity) with preference for phosphatidylethanolamines and phosphatidylglycerols over phosphatidylcholines. In draining lymph nodes, selectively hydrolyzes diacyl and alkenyl forms of phosphatidylethanolamines, releasing omega-3 polyunsaturated fatty acids (PUFAs) such as eicosapentaenoate and docosahexaenoate that are precursors of the anti-inflammatory lipid mediators, resolvins. During the resolution phase of acute inflammation drives docosahexaenoate-derived resolvin D1 synthesis, which suppresses dendritic cell activation and T-helper 1 immune response. May act in an autocrine and paracrine manner. Via a mechanism independent of its catalytic activity, promotes differentiation of regulatory T cells (Tregs) and participates in the maintenance of immune tolerance. May contribute to lipid remodeling of cellular membranes and generation of lipid mediators involved in pathogen clearance. Displays bactericidal activity against Gram-positive bacteria by directly hydrolyzing phospholipids of the bacterial membrane. This Mus musculus (Mouse) protein is Group IID secretory phospholipase A2 (Pla2g2d).